The sequence spans 263 residues: Phosphoinositide-3-kinase-interacting protein 1 (263 aa).

An N-terminal signal peptide occupies residues 1–21 (MLLAWVQAFLVSNMLLAEAYG). Topologically, residues 22–168 (SGGCFWDNGH…NSKEKKDLGT (147 aa)) are extracellular. Residues 24-101 (GCFWDNGHLY…EKRPCEDLRC (78 aa)) enclose the Kringle domain. 3 disulfide bridges follow: Cys25–Cys101, Cys46–Cys82, and Cys70–Cys96. Ser39 carries O-linked (GalNAc...) serine glycosylation. Residue Asn66 is glycosylated (N-linked (GlcNAc...) (complex) asparagine). A helical transmembrane segment spans residues 169–189 (LGYVLGITMMVIIIAIGAGII). At 190–263 (LGYSYKRGKD…LMGQAGTPGA (74 aa)) the chain is on the cytoplasmic side. A compositionally biased stretch (polar residues) spans 242-251 (QTPVDPQEGT). The tract at residues 242 to 263 (QTPVDPQEGTTPLMGQAGTPGA) is disordered.

In terms of processing, N- and O-glycosylated. O-glycosylated with core 1 or possibly core 8 glycans. N-glycan heterogeneity at Asn-66: dHex1Hex5HexNAc4 (major) and dHex1Hex6HexNAc5 (minor).

The protein resides in the cell membrane. In terms of biological role, negative regulator of hepatic phosphatidylinositol 3-kinase (PI3K) activity. The protein is Phosphoinositide-3-kinase-interacting protein 1 (PIK3IP1) of Homo sapiens (Human).